A 347-amino-acid chain; its full sequence is Melanoma-associated antigen B10 (347 aa).

Residues 1-18 (MPRGQKSKLRAREKRRQA) are compositionally biased toward basic residues. 2 disordered regions span residues 1 to 20 (MPRG…QARG) and 56 to 92 (GASN…QMEE). Residues 67–78 (AQSTSTSATAAS) are compositionally biased toward low complexity. Positions 81–92 (RHPEGVNDQMEE) are enriched in basic and acidic residues. The 200-residue stretch at 111–310 (VDEKVIILVH…SEFSNWYTEA (200 aa)) folds into the MAGE domain. The segment at 328–347 (VSATAGARSKVKSSKSSQLQ) is disordered.

This is Melanoma-associated antigen B10 (MAGEB10) from Homo sapiens (Human).